Reading from the N-terminus, the 217-residue chain is Redox-sensing transcriptional repressor Rex (217 aa).

The H-T-H motif DNA-binding region spans 17-56 (RYLRYVEDLLNHDVLRISSSELSQRMGYTASQVRQDFNNF). 91 to 96 (GVGNLG) is a binding site for NAD(+).

It belongs to the transcriptional regulatory Rex family. Homodimer.

It is found in the cytoplasm. Its function is as follows. Modulates transcription in response to changes in cellular NADH/NAD(+) redox state. This Caldicellulosiruptor bescii (strain ATCC BAA-1888 / DSM 6725 / KCTC 15123 / Z-1320) (Anaerocellum thermophilum) protein is Redox-sensing transcriptional repressor Rex.